The chain runs to 215 residues: Probable transaldolase (215 aa).

Lys-83 acts as the Schiff-base intermediate with substrate in catalysis.

The protein belongs to the transaldolase family. Type 3B subfamily.

Its subcellular location is the cytoplasm. It carries out the reaction D-sedoheptulose 7-phosphate + D-glyceraldehyde 3-phosphate = D-erythrose 4-phosphate + beta-D-fructose 6-phosphate. It participates in carbohydrate degradation; pentose phosphate pathway; D-glyceraldehyde 3-phosphate and beta-D-fructose 6-phosphate from D-ribose 5-phosphate and D-xylulose 5-phosphate (non-oxidative stage): step 2/3. Transaldolase is important for the balance of metabolites in the pentose-phosphate pathway. The protein is Probable transaldolase of Clostridium kluyveri (strain NBRC 12016).